Consider the following 469-residue polypeptide: UDP-N-acetylmuramate--L-alanine ligase (469 aa).

113-119 (GTHGKTT) contributes to the ATP binding site.

It belongs to the MurCDEF family.

The protein resides in the cytoplasm. It catalyses the reaction UDP-N-acetyl-alpha-D-muramate + L-alanine + ATP = UDP-N-acetyl-alpha-D-muramoyl-L-alanine + ADP + phosphate + H(+). It participates in cell wall biogenesis; peptidoglycan biosynthesis. Its function is as follows. Cell wall formation. The chain is UDP-N-acetylmuramate--L-alanine ligase from Neisseria meningitidis serogroup A / serotype 4A (strain DSM 15465 / Z2491).